Reading from the N-terminus, the 1047-residue chain is MVGNDWVNSYLEAILAAEPGIANSKPPGTGDSKSSLLLRERGHFSPTRYFVEEVITGFDETDLHRSWVQAAATRSPQERNTRLENLCWRIWNLARQKKQVEGKNAKREAKREREREKARREVTAEMSEDFSEGEKADLPGEIPTPSDNNTKGRMSRISSVDVFENWFAQHKEKKLYIVLISLHGLIRGENMELGRDSDTGGQVKYVVELARALGSMPGVYRVDLLTRQVTAPDVDSSYSEPSEMLNPIDTDIEQENGESSGAYIIRIPFGPKDKYVPKELLWPHIPEFVDRALSHIMQISKVLGEQIGGGQQVWPVSIHGHYADAGDSTALLSGALNVPMVFTGHSLGRDKLEQLLKQGRPKEEINSNYKIWRRIEAEELCLDASEIVITSTRQEVDEQWRLYDGFDPVLERKLRARMKRGVSCLGRFMPRMVVIPPGMEFHHIVPHDVDADGDDENPQTADPPIWSEIMRFFSNPRKPMILALARPDPKKNLVTLVKAFGECRPLRELANLTLIMGNRNDIDELSSTNSSVLLSILKLIDKYDLYGQVAMPKHHQQSDVPEIYRLAAKTKGVFINPAFIEPFGLTLIEAGAHGLPTVATINGGPVDIHRVLDNGLLVDPHDQQAIADALLKLVSDRQLWGRCRQNGLNNIHLFSWPEHCKTYLARIASCKQRHPKWQRVEFENSDSDSPSDSLRDINDISLNLKLSLDGEKSGSNNGVDTNLDAEDRAAERKAEVEKAVSTLAQKSKPTEKFDSKMPTLKRRKNIFVISVDCSATSDLLAVVKTVIDAAGRGSSTGFILSTSMTISETHTALLSGGLKPQDFDAVICSSGSELYFTSSGSEDKTALPYTLDADYHSHIEFRWGGESLRKTLIRWISSVEEKKKTKKGEILVEDESSSTNYCLSFKVKDPALMPPMKELRKLMRNQALRCNAVYCQNGARLNVIPVLASRSQALRYLLVRWGIDLSNMVVFVGDSGDTDYEGLLGGIHKTVILKGLASDLREQPGNRSYPMEDVTPLNSPNITEAKECGRDAIKVALEKLGISLLKP.

The segment covering 101–123 (EGKNAKREAKREREREKARREVT) has biased composition (basic and acidic residues). Residues 101 to 153 (EGKNAKREAKREREREKARREVTAEMSEDFSEGEKADLPGEIPTPSDNNTKGR) form a disordered region. 3 positions are modified to phosphoserine: S127, S131, and S159. The tract at residues 712-731 (KSGSNNGVDTNLDAEDRAAE) is disordered.

Belongs to the glycosyltransferase 1 family. Homodimer or homotetramer. As to expression, expressed in roots, cauline leaves, flower buds, flowers and anthers. Highly expressed in maturing nectaries.

It catalyses the reaction beta-D-fructose 6-phosphate + UDP-alpha-D-glucose = sucrose 6(F)-phosphate + UDP + H(+). It functions in the pathway glycan biosynthesis; sucrose biosynthesis; sucrose from D-fructose 6-phosphate and UDP-alpha-D-glucose: step 1/2. With respect to regulation, activity is regulated by phosphorylation and moderated by concentration of metabolites and light. Functionally, plays a role in photosynthetic sucrose synthesis by catalyzing the rate-limiting step of sucrose biosynthesis from UDP-glucose and fructose- 6-phosphate. Involved in the regulation of carbon partitioning in the leaves of plants. May regulate the synthesis of sucrose and therefore play a major role as a limiting factor in the export of photoassimilates out of the leaf. Plays a role for sucrose availability that is essential for plant growth and fiber elongation. Required for nectar secretion. The chain is Probable sucrose-phosphate synthase 2 (SPS2) from Arabidopsis thaliana (Mouse-ear cress).